The sequence spans 614 residues: Vitamin B12 transporter BtuB (614 aa).

An N-terminal signal peptide occupies residues 1 to 20 (MIKKATLLTAFSVTAFSAWA). Positions 26 to 33 (DTLVVTAN) match the TonB box motif. The 115-residue stretch at 38–152 (PRSAVLAPVT…IGGVVNIITT (115 aa)) folds into the TBDR plug domain. Residues Ser-85, Asn-92, and 110 to 111 (VS) each bind cyanocob(III)alamin. The TBDR beta-barrel domain occupies 155-614 (NPGTELTAGW…EYTLSGSYTF (460 aa)). 3 beta stranded membrane passes run 158–165 (TELTAGWG), 169–178 (YQNYDISTQQ), and 184–195 (TRATLIGDYEYT). Ca(2+) is bound by residues Asp-199, Gln-211, Asp-213, and Asp-215. The next 2 membrane-spanning stretches (beta stranded) occupy residues 217-227 (FLSKTLYGALE) and 232-248 (DRWSGFVRGYGYDNRTD). Ca(2+) contacts are provided by Tyr-249 and Asp-250. Ala-251 serves as a coordination point for cyanocob(III)alamin. Position 261 (Asp-261) interacts with Ca(2+). A run of 14 beta stranded transmembrane segments spans residues 263-277 (RKLYSQSWDAGLRFN), 279-296 (ERIQSQLVSSYSHSKDYN), 309-325 (TLDEMKQYNVQWTNSVV), 328-337 (HGNVGAGVDW), 353-369 (YDQRNTGVYLTGLQQLG), 371-381 (FTLEAAARSDD), 385-400 (FGRHGTWQTSAGWEFI), 403-417 (YRFIASYGTSYKAPN), 434-443 (KSKQWEGAFE), 449-458 (VSWRISGYRN), 473-490 (YYNEGKARIKGIEATANF), 494-509 (PLTHTVSYDYVDARNA), 517-529 (RRSKQMAKYQLDW), and 535-550 (DWGVTYQYLGSRYDSD). Thr-309 contacts cyanocob(III)alamin. Arg-517 is a binding site for cyanocob(III)alamin. A cyanocob(III)alamin-binding site is contributed by Tyr-551. 3 beta stranded membrane-spanning segments follow: residues 558–572 (TVKMGGVSLWDLTVA), 585–596 (IANLFDKDYETV), and 602–614 (AGREYTLSGSYTF). A TonB C-terminal box motif is present at residues 597–614 (YGYQTAGREYTLSGSYTF).

This sequence belongs to the TonB-dependent receptor family. BtuB (TC 1.B.14.3.1) subfamily.

The protein localises to the cell outer membrane. In terms of biological role, involved in the active translocation of vitamin B12 (cyanocobalamin) across the outer membrane to the periplasmic space. It derives its energy for transport by interacting with the trans-periplasmic membrane protein TonB. This is Vitamin B12 transporter BtuB from Salmonella choleraesuis (strain SC-B67).